The following is a 294-amino-acid chain: Acetylglutamate kinase (294 aa).

Substrate is bound by residues 63–64 (GG), arginine 85, and asparagine 188.

The protein belongs to the acetylglutamate kinase family. ArgB subfamily.

It is found in the cytoplasm. It carries out the reaction N-acetyl-L-glutamate + ATP = N-acetyl-L-glutamyl 5-phosphate + ADP. The protein operates within amino-acid biosynthesis; L-arginine biosynthesis; N(2)-acetyl-L-ornithine from L-glutamate: step 2/4. Functionally, catalyzes the ATP-dependent phosphorylation of N-acetyl-L-glutamate. This is Acetylglutamate kinase from Methanococcus vannielii (strain ATCC 35089 / DSM 1224 / JCM 13029 / OCM 148 / SB).